Reading from the N-terminus, the 215-residue chain is Protein Syd (215 aa).

This sequence belongs to the Syd family.

Its subcellular location is the cell inner membrane. In terms of biological role, interacts with the SecY protein in vivo. May bind preferentially to an uncomplexed state of SecY, thus functioning either as a chelating agent for excess SecY in the cell or as a regulatory factor that negatively controls the translocase function. In Shewanella amazonensis (strain ATCC BAA-1098 / SB2B), this protein is Protein Syd.